The sequence spans 137 residues: BolA-like protein 1 (137 aa).

Phosphoserine is present on Ser81. The interval 115–137 (RENPQLDISPPCLGGSKKTRGTS) is disordered.

Belongs to the BolA/IbaG family. As to quaternary structure, interacts with GLRX5.

It is found in the mitochondrion. Its function is as follows. Acts as a mitochondrial iron-sulfur (Fe-S) cluster assembly factor that facilitates (Fe-S) cluster insertion into a subset of mitochondrial proteins. Probably acts together with the monothiol glutaredoxin GLRX5. May protect cells against oxidative stress. The polypeptide is BolA-like protein 1 (Bola1) (Mus musculus (Mouse)).